A 30-amino-acid polypeptide reads, in one-letter code: Cycloviolacin-H4 (30 aa).

The cyclopeptide (Gly-Asn) cross-link spans Gly1 to Asn30. 3 disulfides stabilise this stretch: Cys4/Cys21, Cys8/Cys23, and Cys13/Cys28.

In terms of processing, this is a cyclic peptide.

Functionally, probably participates in a plant defense mechanism. Has potent hemolytic activity. This Viola hederacea (Australian violet) protein is Cycloviolacin-H4.